Here is a 2148-residue protein sequence, read N- to C-terminus: Polyketide synthase 1 (2148 aa).

Positions phenylalanine 19–histidine 261 are N-terminal acylcarrier protein transacylase domain (SAT). Residues glutamate 394–aspartate 829 enclose the Ketosynthase family 3 (KS3) domain. Residues cysteine 566, histidine 701, and histidine 745 each act as for beta-ketoacyl synthase activity in the active site. The malonyl-CoA:ACP transacylase (MAT) domain stretch occupies residues alanine 929–tryptophan 1233. The active-site For acyl/malonyl transferase activity is serine 1018. The interval threonine 1310–proline 1624 is product template (PT) domain. Positions histidine 1314–valine 1447 are N-terminal hotdog fold. Residues histidine 1314–asparagine 1619 form the PKS/mFAS DH domain. The active-site Proton acceptor; for dehydratase activity is the histidine 1346. The tract at residues leucine 1474–asparagine 1619 is C-terminal hotdog fold. The active-site Proton donor; for dehydratase activity is aspartate 1533. Residues asparagine 1619–alanine 1657 form a disordered region. Over residues serine 1635–serine 1650 the composition is skewed to low complexity. The region spanning arginine 1678–threonine 1752 is the Carrier 1 domain. Serine 1712 is modified (O-(pantetheine 4'-phosphoryl)serine). The segment covering serine 1755–proline 1790 has biased composition (low complexity). Positions serine 1755–glycine 1796 are disordered. The region spanning serine 1793 to histidine 1870 is the Carrier 2 domain. Residue serine 1830 is modified to O-(pantetheine 4'-phosphoryl)serine. The segment at leucine 1882–threonine 2146 is thioesterase (TE) domain. The active-site For thioesterase activity is the serine 1973.

In terms of biological role, polyketide synthase; part of the Pks1 gene cluster that mediates the biosynthesis of an anthraquinone derivative pigment that contributes to conidial pigmentation that provides protection from UV radiation, heat and cold stress. The polyketide synthase Pks1 produces 1-acetyl-2,4,6,8-tetrahydroxy-9,10-anthraquinone though condensation of acetyl-CoA with malonyl-CoA. The dehydratase EthD and the laccase Mlac1 further convert the anthraquinone derivative into the final conidial pigment. This Metarhizium guizhouense (strain ARSEF 977) protein is Polyketide synthase 1.